The chain runs to 194 residues: Leucyl/phenylalanyl-tRNA--protein transferase (194 aa).

This sequence belongs to the L/F-transferase family.

The protein localises to the cytoplasm. The enzyme catalyses N-terminal L-lysyl-[protein] + L-leucyl-tRNA(Leu) = N-terminal L-leucyl-L-lysyl-[protein] + tRNA(Leu) + H(+). It catalyses the reaction N-terminal L-arginyl-[protein] + L-leucyl-tRNA(Leu) = N-terminal L-leucyl-L-arginyl-[protein] + tRNA(Leu) + H(+). It carries out the reaction L-phenylalanyl-tRNA(Phe) + an N-terminal L-alpha-aminoacyl-[protein] = an N-terminal L-phenylalanyl-L-alpha-aminoacyl-[protein] + tRNA(Phe). Functionally, functions in the N-end rule pathway of protein degradation where it conjugates Leu, Phe and, less efficiently, Met from aminoacyl-tRNAs to the N-termini of proteins containing an N-terminal arginine or lysine. The protein is Leucyl/phenylalanyl-tRNA--protein transferase of Chlorobaculum parvum (strain DSM 263 / NCIMB 8327) (Chlorobium vibrioforme subsp. thiosulfatophilum).